Consider the following 618-residue polypeptide: Dihydroxy-acid dehydratase (618 aa).

D81 serves as a coordination point for Mg(2+). Residue C122 coordinates [2Fe-2S] cluster. Mg(2+) is bound by residues D123 and K124. The residue at position 124 (K124) is an N6-carboxylysine. C195 lines the [2Fe-2S] cluster pocket. Residue E493 participates in Mg(2+) binding. The active-site Proton acceptor is the S519.

This sequence belongs to the IlvD/Edd family. As to quaternary structure, homodimer. [2Fe-2S] cluster serves as cofactor. It depends on Mg(2+) as a cofactor.

It carries out the reaction (2R)-2,3-dihydroxy-3-methylbutanoate = 3-methyl-2-oxobutanoate + H2O. The enzyme catalyses (2R,3R)-2,3-dihydroxy-3-methylpentanoate = (S)-3-methyl-2-oxopentanoate + H2O. The protein operates within amino-acid biosynthesis; L-isoleucine biosynthesis; L-isoleucine from 2-oxobutanoate: step 3/4. Its pathway is amino-acid biosynthesis; L-valine biosynthesis; L-valine from pyruvate: step 3/4. In terms of biological role, functions in the biosynthesis of branched-chain amino acids. Catalyzes the dehydration of (2R,3R)-2,3-dihydroxy-3-methylpentanoate (2,3-dihydroxy-3-methylvalerate) into 2-oxo-3-methylpentanoate (2-oxo-3-methylvalerate) and of (2R)-2,3-dihydroxy-3-methylbutanoate (2,3-dihydroxyisovalerate) into 2-oxo-3-methylbutanoate (2-oxoisovalerate), the penultimate precursor to L-isoleucine and L-valine, respectively. The polypeptide is Dihydroxy-acid dehydratase (Shewanella amazonensis (strain ATCC BAA-1098 / SB2B)).